Consider the following 243-residue polypeptide: DNA repair protein RecO (243 aa).

This sequence belongs to the RecO family.

Involved in DNA repair and RecF pathway recombination. In Phenylobacterium zucineum (strain HLK1), this protein is DNA repair protein RecO.